Here is an 881-residue protein sequence, read N- to C-terminus: Serine/threonine-protein phosphatase 6 regulatory subunit 1 (881 aa).

Positions 10–403 (SSHLDTLLER…VFNNFLHAQV (394 aa)) are interaction with PPP6C. Phosphoserine is present on S232. Phosphothreonine is present on T524. A phosphoserine mark is found at S529, S530, S531, S635, and S638. Acidic residues-rich tracts occupy residues 621–642 (DDDE…DGED) and 669–686 (DSED…DEEG). A disordered region spans residues 621–881 (DDDEEEEDEE…PEGPASPGSQ (261 aa)). Positions 700-710 (YPSPGPQPPGP) are enriched in pro residues. Phosphoserine is present on residues S702, S726, and S759. The segment covering 814-830 (APSSSDSATRDPSTSVP) has biased composition (polar residues). S846 carries the post-translational modification Phosphoserine.

This sequence belongs to the SAPS family. As to quaternary structure, protein phosphatase 6 (PP6) holoenzyme is proposed to be a heterotrimeric complex formed of the catalytic subunit, a SAPS domain-containing subunit (PP6R) and an ankyrin repeat-domain containing regulatory subunit (ARS). Interacts with PPP6C and NFKBIE. Interacts with ANKRD28, ANKRD44 and ANKRD52. In terms of tissue distribution, ubiquitous with higher expression in testis.

Its subcellular location is the cytoplasm. Its function is as follows. Regulatory subunit of protein phosphatase 6 (PP6). May function as a scaffolding PP6 subunit. Involved in the PP6-mediated dephosphorylation of NFKBIE opposing its degradation in response to TNF-alpha. In Homo sapiens (Human), this protein is Serine/threonine-protein phosphatase 6 regulatory subunit 1 (PPP6R1).